A 237-amino-acid chain; its full sequence is Myelin protein zero-like protein 3 (237 aa).

The N-terminal stretch at 1-32 (MQLARGTVGGRGCALFPLLSILVVQGARIVLS) is a signal peptide. Residues 33–149 (LEISADAHVR…NIPLTELTVT (117 aa)) form the Ig-like V-type domain. Residues 33-159 (LEISADAHVR…ERGFGTMLSS (127 aa)) are Extracellular-facing. Cysteines 53 and 129 form a disulfide. Residue asparagine 124 is glycosylated (N-linked (GlcNAc...) asparagine). Residues 160 to 180 (VALLSILVFVPSAVVVILLLV) form a helical membrane-spanning segment. Residues 181 to 237 (RMGRKATGVQKRSRSGYKKSSIEVSDDTDQEDSNDCMTRLCVRCAECLDSDYEEEAY) lie on the Cytoplasmic side of the membrane.

Belongs to the myelin P0 protein family. As to expression, present in all tissues tested, including the skin. Present in the keratinocytes and sebocytes in the skin (at protein level).

It localises to the membrane. In terms of biological role, mediates homophilic cell-cell adhesion. The chain is Myelin protein zero-like protein 3 (Mpzl3) from Mus musculus (Mouse).